The chain runs to 316 residues: UDP-N-acetylenolpyruvoylglucosamine reductase (316 aa).

Residues 30 to 194 (VGGEADYLVF…LSVKFALAPG (165 aa)) form the FAD-binding PCMH-type domain. Residue arginine 173 is part of the active site. Residue serine 223 is the Proton donor of the active site. Glutamate 293 is a catalytic residue.

This sequence belongs to the MurB family. The cofactor is FAD.

It localises to the cytoplasm. It carries out the reaction UDP-N-acetyl-alpha-D-muramate + NADP(+) = UDP-N-acetyl-3-O-(1-carboxyvinyl)-alpha-D-glucosamine + NADPH + H(+). The protein operates within cell wall biogenesis; peptidoglycan biosynthesis. Functionally, cell wall formation. This Streptococcus pneumoniae serotype 19F (strain G54) protein is UDP-N-acetylenolpyruvoylglucosamine reductase.